The chain runs to 500 residues: L-arabinose isomerase (500 aa).

Mn(2+) is bound by residues Glu-306, Glu-333, His-350, and His-450.

Belongs to the arabinose isomerase family. Homohexamer. Requires Mn(2+) as cofactor.

The catalysed reaction is beta-L-arabinopyranose = L-ribulose. It functions in the pathway carbohydrate degradation; L-arabinose degradation via L-ribulose; D-xylulose 5-phosphate from L-arabinose (bacterial route): step 1/3. Functionally, catalyzes the conversion of L-arabinose to L-ribulose. The polypeptide is L-arabinose isomerase (Escherichia coli O17:K52:H18 (strain UMN026 / ExPEC)).